The primary structure comprises 106 residues: UPF0060 membrane protein Csal_2746 (106 aa).

4 consecutive transmembrane segments (helical) span residues 6–26 (LLFI…WLWL), 31–51 (SPWL…LLSL), 59–79 (VYAA…WGVD), and 85–105 (PTDW…ASGW).

Belongs to the UPF0060 family.

It is found in the cell inner membrane. The polypeptide is UPF0060 membrane protein Csal_2746 (Chromohalobacter salexigens (strain ATCC BAA-138 / DSM 3043 / CIP 106854 / NCIMB 13768 / 1H11)).